A 119-amino-acid polypeptide reads, in one-letter code: Putative transmembrane protein ORF119 (119 aa).

3 helical membrane-spanning segments follow: residues 9 to 29, 73 to 93, and 95 to 115; these read TLAIALVFLGISLIFLVPAMV, QYAGIYTLYLSFISFVGSIFT, and PIALIMLILVSLIITLFAFYY.

Its subcellular location is the host membrane. The sequence is that of Putative transmembrane protein ORF119 from Acidianus convivator (ATV).